The sequence spans 417 residues: Gamma-glutamyl phosphate reductase (417 aa).

It belongs to the gamma-glutamyl phosphate reductase family.

The protein localises to the cytoplasm. The enzyme catalyses L-glutamate 5-semialdehyde + phosphate + NADP(+) = L-glutamyl 5-phosphate + NADPH + H(+). It participates in amino-acid biosynthesis; L-proline biosynthesis; L-glutamate 5-semialdehyde from L-glutamate: step 2/2. Its function is as follows. Catalyzes the NADPH-dependent reduction of L-glutamate 5-phosphate into L-glutamate 5-semialdehyde and phosphate. The product spontaneously undergoes cyclization to form 1-pyrroline-5-carboxylate. The polypeptide is Gamma-glutamyl phosphate reductase (Cronobacter sakazakii (strain ATCC BAA-894) (Enterobacter sakazakii)).